The primary structure comprises 513 residues: GMP synthase [glutamine-hydrolyzing] (513 aa).

The 191-residue stretch at 5 to 195 (LVLVIDFGGQ…VYNICGCTGD (191 aa)) folds into the Glutamine amidotransferase type-1 domain. Residue Cys82 is the Nucleophile of the active site. Residues His169 and Glu171 contribute to the active site. The GMPS ATP-PPase domain occupies 196-388 (WKMDSFVEKT…LGIPEKLVFR (193 aa)). ATP is bound at residue 223–229 (SGGVDSS).

In terms of assembly, homodimer.

It catalyses the reaction XMP + L-glutamine + ATP + H2O = GMP + L-glutamate + AMP + diphosphate + 2 H(+). Its pathway is purine metabolism; GMP biosynthesis; GMP from XMP (L-Gln route): step 1/1. In terms of biological role, catalyzes the synthesis of GMP from XMP. In Clostridium botulinum (strain Eklund 17B / Type B), this protein is GMP synthase [glutamine-hydrolyzing].